The sequence spans 338 residues: Ketol-acid reductoisomerase (NADP(+)) (338 aa).

The KARI N-terminal Rossmann domain maps to 2-182; sequence TKMYYEKDTD…GGARAGVLET (181 aa). NADP(+) contacts are provided by residues 25 to 28, serine 51, serine 53, and 83 to 86; these read YGSQ and DELQ. Histidine 108 is an active-site residue. Residue glycine 134 coordinates NADP(+). Residues 183 to 330 enclose the KARI C-terminal knotted domain; sequence TFRTETETDL…SEIRKLYCWN (148 aa). Residues aspartate 191, glutamate 195, glutamate 227, and glutamate 231 each contribute to the Mg(2+) site. A substrate-binding site is contributed by serine 252.

Belongs to the ketol-acid reductoisomerase family. The cofactor is Mg(2+).

It carries out the reaction (2R)-2,3-dihydroxy-3-methylbutanoate + NADP(+) = (2S)-2-acetolactate + NADPH + H(+). The enzyme catalyses (2R,3R)-2,3-dihydroxy-3-methylpentanoate + NADP(+) = (S)-2-ethyl-2-hydroxy-3-oxobutanoate + NADPH + H(+). Its pathway is amino-acid biosynthesis; L-isoleucine biosynthesis; L-isoleucine from 2-oxobutanoate: step 2/4. It functions in the pathway amino-acid biosynthesis; L-valine biosynthesis; L-valine from pyruvate: step 2/4. In terms of biological role, involved in the biosynthesis of branched-chain amino acids (BCAA). Catalyzes an alkyl-migration followed by a ketol-acid reduction of (S)-2-acetolactate (S2AL) to yield (R)-2,3-dihydroxy-isovalerate. In the isomerase reaction, S2AL is rearranged via a Mg-dependent methyl migration to produce 3-hydroxy-3-methyl-2-ketobutyrate (HMKB). In the reductase reaction, this 2-ketoacid undergoes a metal-dependent reduction by NADPH to yield (R)-2,3-dihydroxy-isovalerate. The polypeptide is Ketol-acid reductoisomerase (NADP(+)) (Clostridium botulinum (strain Alaska E43 / Type E3)).